Here is a 165-residue protein sequence, read N- to C-terminus: Phosphopantetheine adenylyltransferase (165 aa).

Substrate is bound at residue Ser-10. ATP is bound by residues 10-11 (SF) and His-18. Lys-42, Leu-74, and Arg-88 together coordinate substrate. ATP contacts are provided by residues 89–91 (GLR), Glu-99, and 124–130 (YSFLSSS).

Belongs to the bacterial CoaD family. In terms of assembly, homohexamer. The cofactor is Mg(2+).

The protein localises to the cytoplasm. The catalysed reaction is (R)-4'-phosphopantetheine + ATP + H(+) = 3'-dephospho-CoA + diphosphate. Its pathway is cofactor biosynthesis; coenzyme A biosynthesis; CoA from (R)-pantothenate: step 4/5. Functionally, reversibly transfers an adenylyl group from ATP to 4'-phosphopantetheine, yielding dephospho-CoA (dPCoA) and pyrophosphate. The sequence is that of Phosphopantetheine adenylyltransferase from Anoxybacillus flavithermus (strain DSM 21510 / WK1).